A 958-amino-acid chain; its full sequence is Atromentin synthetase greA (958 aa).

Residues 60–465 (SIQTKTFSAF…SGRIKDTVIV (406 aa)) are adenylation (A) domain. In terms of domain architecture, Carrier spans 597-675 (APSTETEKAL…SLANYVNALL (79 aa)). A thiolation and peptide carrier (T) domain region spans residues 602 to 672 (TEKALAKIYA…VVSSLANYVN (71 aa)). Ser634 bears the O-(pantetheine 4'-phosphoryl)serine mark. Positions 698–946 (PIFFVHPGVG…MDFDHVPQFQ (249 aa)) are thioesterase (TE) domain.

It belongs to the ATP-dependent AMP-binding enzyme family.

It participates in secondary metabolite biosynthesis. An L-tyrosine:2-oxoglutarate aminotransferase and atromentin synthetase greA catalyze consecutive steps to turn over L-tyrosine into atromentin, which represents the generic precursor molecule for the entire terphenylquinone and pulvinic acid family of pigments, which are widely distributed secondary metabolites in homobasidiomycetes. The first step catalyzed by the aminotransferase converts L-tyrosine in to 4-hydroxyphenylpyruvate (4-HPP). Adenylation of two 4-HPP monomers by the greA adenylation (A) domain, covalent tethering of the monomers as a thioester and oxoester onto the greA thiolation (T) and thioesterase (TE) domains, respectively, and symmetric C-C-bond formation between two monomers catalyzed by the greA TE domain leads to atromentin. The sequence is that of Atromentin synthetase greA (greA) from Suillus grevillei (Larch bolete).